Here is a 242-residue protein sequence, read N- to C-terminus: Pyridoxine 5'-phosphate synthase (242 aa).

A 3-amino-2-oxopropyl phosphate-binding site is contributed by asparagine 9. Residue aspartate 11 to histidine 12 coordinates 1-deoxy-D-xylulose 5-phosphate. 3-amino-2-oxopropyl phosphate is bound at residue arginine 20. The active-site Proton acceptor is histidine 45. 2 residues coordinate 1-deoxy-D-xylulose 5-phosphate: arginine 47 and histidine 52. Glutamate 72 acts as the Proton acceptor in catalysis. Threonine 102 is a 1-deoxy-D-xylulose 5-phosphate binding site. Residue histidine 193 is the Proton donor of the active site. 3-amino-2-oxopropyl phosphate-binding positions include glycine 194 and glycine 215–histidine 216.

This sequence belongs to the PNP synthase family. As to quaternary structure, homooctamer; tetramer of dimers.

The protein localises to the cytoplasm. It carries out the reaction 3-amino-2-oxopropyl phosphate + 1-deoxy-D-xylulose 5-phosphate = pyridoxine 5'-phosphate + phosphate + 2 H2O + H(+). The protein operates within cofactor biosynthesis; pyridoxine 5'-phosphate biosynthesis; pyridoxine 5'-phosphate from D-erythrose 4-phosphate: step 5/5. In terms of biological role, catalyzes the complicated ring closure reaction between the two acyclic compounds 1-deoxy-D-xylulose-5-phosphate (DXP) and 3-amino-2-oxopropyl phosphate (1-amino-acetone-3-phosphate or AAP) to form pyridoxine 5'-phosphate (PNP) and inorganic phosphate. This chain is Pyridoxine 5'-phosphate synthase, found in Idiomarina loihiensis (strain ATCC BAA-735 / DSM 15497 / L2-TR).